Here is a 399-residue protein sequence, read N- to C-terminus: Probable sugar efflux transporter (399 aa).

Transmembrane regions (helical) follow at residues 15 to 35 (VVTLAIAAFIFNTTEFAPVGL), 50 to 70 (VGMMLTIYAWVVALMSLPFML), 81 to 101 (LIGLFILFIASHVLSFFAWNF), 103 to 123 (VLVISRIGIAFAHAVFWSITS), 136 to 156 (AQALSLIATGTALAMVFGIPI), 168 to 188 (MTFLAIGLGALATLACLVKLL), 209 to 229 (PALVSVYILTVVVVTAHYTAY), 246 to 266 (FATVLLLILGGAGIIGSILFG), 273 to 293 (ASGLISLAIALLLACLLLLLP), 301 to 321 (LMLLSIFWGVAIMIIGLGMQV), 333 to 353 (VAMSLFSGIFNIGIGAGALVG), and 364 to 384 (SVGYVGAIPALVALVWSLMIF).

The protein belongs to the major facilitator superfamily. SotB (TC 2.A.1.2) family.

It localises to the cell inner membrane. Functionally, involved in the efflux of sugars. The physiological role may be the reduction of the intracellular concentration of toxic sugars or sugar metabolites. The protein is Probable sugar efflux transporter of Klebsiella pneumoniae subsp. pneumoniae (strain ATCC 700721 / MGH 78578).